Reading from the N-terminus, the 235-residue chain is Large ribosomal subunit protein uL1 (235 aa).

Belongs to the universal ribosomal protein uL1 family. Part of the 50S ribosomal subunit.

In terms of biological role, binds directly to 23S rRNA. The L1 stalk is quite mobile in the ribosome, and is involved in E site tRNA release. Protein L1 is also a translational repressor protein, it controls the translation of the L11 operon by binding to its mRNA. The protein is Large ribosomal subunit protein uL1 of Prochlorococcus marinus (strain AS9601).